A 236-amino-acid polypeptide reads, in one-letter code: LexA repressor (236 aa).

The H-T-H motif DNA-binding region spans 26 to 46 (FDEMKDALDLRSKSGIHRLIT). The tract at residues 85–109 (PSVIEGNLGKVRPPSPTPAEDDHDR) is disordered. Active-site for autocatalytic cleavage activity residues include serine 157 and lysine 195.

It belongs to the peptidase S24 family. As to quaternary structure, homodimer.

It catalyses the reaction Hydrolysis of Ala-|-Gly bond in repressor LexA.. Its function is as follows. Represses a number of genes involved in the response to DNA damage (SOS response), including recA and lexA. In the presence of single-stranded DNA, RecA interacts with LexA causing an autocatalytic cleavage which disrupts the DNA-binding part of LexA, leading to derepression of the SOS regulon and eventually DNA repair. The protein is LexA repressor of Rhodopseudomonas palustris (strain ATCC BAA-98 / CGA009).